Reading from the N-terminus, the 444-residue chain is Trigger factor (444 aa).

Residues 185–270 (GDKLIIDFEG…VNEIQIAKDF (86 aa)) form the PPIase FKBP-type domain.

The protein belongs to the FKBP-type PPIase family. Tig subfamily.

The protein localises to the cytoplasm. The enzyme catalyses [protein]-peptidylproline (omega=180) = [protein]-peptidylproline (omega=0). In terms of biological role, involved in protein export. Acts as a chaperone by maintaining the newly synthesized protein in an open conformation. Functions as a peptidyl-prolyl cis-trans isomerase. The sequence is that of Trigger factor from Wolbachia pipientis wMel.